The sequence spans 557 residues: MFS-type transporter clz4 (557 aa).

14 helical membrane passes run Leu22–Gly42, Ser59–Gly79, Ala89–Thr109, Leu120–Val140, Ala150–Val170, Gly179–Leu199, Trp217–Pro237, Ser245–Ile265, Leu269–Leu289, Val319–Ala339, Ser346–Leu366, Val379–Ile399, Phe419–Thr439, and His479–Lys499. The span at Ser505 to Glu523 shows a compositional bias: basic and acidic residues. The disordered stretch occupies residues Ser505 to Gly557.

This sequence belongs to the major facilitator superfamily. TCR/Tet family.

It is found in the membrane. MFS-type transporter; part of the gene cluster that mediates the biosynthesis of squalestatin S1 (SQS1, also known as zaragozic acid A), a heavily oxidized fungal polyketide that offers potent cholesterol lowering activity by targeting squalene synthase (SS). The polypeptide is MFS-type transporter clz4 (Cochliobolus lunatus (Filamentous fungus)).